The sequence spans 140 residues: Large ribosomal subunit protein uL11 (140 aa).

Belongs to the universal ribosomal protein uL11 family. In terms of assembly, part of the ribosomal stalk of the 50S ribosomal subunit. Interacts with L10 and the large rRNA to form the base of the stalk. L10 forms an elongated spine to which L12 dimers bind in a sequential fashion forming a multimeric L10(L12)X complex. Post-translationally, one or more lysine residues are methylated.

Its function is as follows. Forms part of the ribosomal stalk which helps the ribosome interact with GTP-bound translation factors. This chain is Large ribosomal subunit protein uL11, found in Staphylococcus saprophyticus subsp. saprophyticus (strain ATCC 15305 / DSM 20229 / NCIMB 8711 / NCTC 7292 / S-41).